Reading from the N-terminus, the 242-residue chain is Endoglucanase-5 (242 aa).

The signal sequence occupies residues 1–17 (MKATLVLGSLIVGAVSA). Residues 18-182 (YKATTTRYYD…ETDPTPVLGN (165 aa)) are catalytic. Asp-27 functions as the Nucleophile in the catalytic mechanism. Asp-134 (proton donor) is an active-site residue. Residues 177-206 (TPVLGNDTGSTPPGSSPPATSSSPPSGGGQ) are disordered. Asn-182 carries N-linked (GlcNAc...) asparagine glycosylation. Positions 184–201 (TGSTPPGSSPPATSSSPP) are enriched in low complexity. A CBM1 domain is found at 205–241 (GQQTLYGQCGGAGWTGPTTCQAPGTCKVQNQWYSQCL). 2 disulfides stabilise this stretch: Cys-213/Cys-230 and Cys-224/Cys-240.

Belongs to the glycosyl hydrolase 45 (cellulase K) family.

The catalysed reaction is Endohydrolysis of (1-&gt;4)-beta-D-glucosidic linkages in cellulose, lichenin and cereal beta-D-glucans.. The sequence is that of Endoglucanase-5 (egl5) from Hypocrea jecorina (Trichoderma reesei).